Here is a 274-residue protein sequence, read N- to C-terminus: Undecaprenyl-diphosphatase (274 aa).

8 helical membrane-spanning segments follow: residues 1 to 21 (MDWL…FLPI), 42 to 62 (VKDT…LVYY), 81 to 101 (LWLG…LFGD), 107 to 127 (LFRP…MWLL), 142 to 162 (ISAG…LWPG), 184 to 204 (TKFS…LDFI), 213 to 233 (IGVV…YFAI), and 248 to 268 (FAVY…RGVL).

It belongs to the UppP family.

The protein localises to the cell membrane. It carries out the reaction di-trans,octa-cis-undecaprenyl diphosphate + H2O = di-trans,octa-cis-undecaprenyl phosphate + phosphate + H(+). Functionally, catalyzes the dephosphorylation of undecaprenyl diphosphate (UPP). Confers resistance to bacitracin. The protein is Undecaprenyl-diphosphatase of Deinococcus radiodurans (strain ATCC 13939 / DSM 20539 / JCM 16871 / CCUG 27074 / LMG 4051 / NBRC 15346 / NCIMB 9279 / VKM B-1422 / R1).